Reading from the N-terminus, the 861-residue chain is DNA mismatch repair protein MutS (861 aa).

Residue 616–623 coordinates ATP; it reads GPNMGGKS.

The protein belongs to the DNA mismatch repair MutS family.

Its function is as follows. This protein is involved in the repair of mismatches in DNA. It is possible that it carries out the mismatch recognition step. This protein has a weak ATPase activity. The chain is DNA mismatch repair protein MutS from Haemophilus influenzae (strain 86-028NP).